The following is a 131-amino-acid chain: Aspartate 1-decarboxylase (131 aa).

The active-site Schiff-base intermediate with substrate; via pyruvic acid is Ser25. Residue Ser25 is modified to Pyruvic acid (Ser). Thr57 lines the substrate pocket. Catalysis depends on Tyr58, which acts as the Proton donor. Substrate is bound at residue 73-75; sequence GAA.

Belongs to the PanD family. In terms of assembly, heterooctamer of four alpha and four beta subunits. Pyruvate is required as a cofactor. Post-translationally, is synthesized initially as an inactive proenzyme, which is activated by self-cleavage at a specific serine bond to produce a beta-subunit with a hydroxyl group at its C-terminus and an alpha-subunit with a pyruvoyl group at its N-terminus.

It is found in the cytoplasm. It catalyses the reaction L-aspartate + H(+) = beta-alanine + CO2. It functions in the pathway cofactor biosynthesis; (R)-pantothenate biosynthesis; beta-alanine from L-aspartate: step 1/1. Catalyzes the pyruvoyl-dependent decarboxylation of aspartate to produce beta-alanine. The polypeptide is Aspartate 1-decarboxylase (Anaeromyxobacter sp. (strain Fw109-5)).